A 146-amino-acid chain; its full sequence is UPF0310 protein YdcG (146 aa).

It belongs to the UPF0310 family.

In Bacillus subtilis (strain 168), this protein is UPF0310 protein YdcG (ydcG).